Here is a 377-residue protein sequence, read N- to C-terminus: Putative glutamate--cysteine ligase 2 (377 aa).

It belongs to the glutamate--cysteine ligase type 2 family. YbdK subfamily.

The catalysed reaction is L-cysteine + L-glutamate + ATP = gamma-L-glutamyl-L-cysteine + ADP + phosphate + H(+). In terms of biological role, ATP-dependent carboxylate-amine ligase which exhibits weak glutamate--cysteine ligase activity. This is Putative glutamate--cysteine ligase 2 from Pseudomonas aeruginosa (strain ATCC 15692 / DSM 22644 / CIP 104116 / JCM 14847 / LMG 12228 / 1C / PRS 101 / PAO1).